A 470-amino-acid chain; its full sequence is Asparagine--tRNA ligase (470 aa).

It belongs to the class-II aminoacyl-tRNA synthetase family. As to quaternary structure, homodimer.

It is found in the cytoplasm. The catalysed reaction is tRNA(Asn) + L-asparagine + ATP = L-asparaginyl-tRNA(Asn) + AMP + diphosphate + H(+). This Blochmanniella floridana protein is Asparagine--tRNA ligase.